A 347-amino-acid polypeptide reads, in one-letter code: Ileal sodium/bile acid cotransporter (347 aa).

The Extracellular portion of the chain corresponds to 1–29; it reads MSNLTVGCLANATVCEGASCVAPESNFNA. N-linked (GlcNAc...) asparagine glycosylation is found at N3 and N11. The chain crosses the membrane as a helical span at residues 30–50; sequence ILSVVLSTVLTILLALVMFSM. At 51–83 the chain is on the cytoplasmic side; it reads GCNVEIKKFLGHIRRPWGIFIGFLCQFGIMPLT. Residues 84–104 form a helical membrane-spanning segment; it reads GFVLAVAFGIMPIQAVVVLIM. The Extracellular portion of the chain corresponds to 105–127; sequence GCCPGGTASNILAYWVDGDMDLS. The helical transmembrane segment at 128-148 threads the bilayer; that stretch reads VSMTTCSTLLALGMMPLCLYV. Over 149–158 the chain is Cytoplasmic; sequence YTKMWVDSGT. A helical membrane pass occupies residues 159–179; that stretch reads IVIPYDNIGTSLVALVVPVSI. The Extracellular portion of the chain corresponds to 180–196; that stretch reads GMFVNHKWPQKAKIILK. A helical transmembrane segment spans residues 197-217; the sequence is VGSIAGAVLIVLIAVVGGILY. Topologically, residues 218 to 225 are cytoplasmic; that stretch reads QSAWIIEP. Residues 226–246 form a helical membrane-spanning segment; sequence KLWIIGTIFPMAGYSLGFFLA. Residues 247–289 lie on the Extracellular side of the membrane; sequence RIAGQPWYRCRTVALETGMQNTQLCSTIVQLSFSPEDLTYVFT. The helical transmembrane segment at 290-310 threads the bilayer; it reads FPLIYSIFQIAFAAIFLGIYV. Over 311–347 the chain is Cytoplasmic; the sequence is AYRKCHGKNDAEFPDIKDTKTEPESSFHQMNGGFQPE. Positions 323–335 are enriched in basic and acidic residues; sequence FPDIKDTKTEPES. Residues 323-347 are disordered; that stretch reads FPDIKDTKTEPESSFHQMNGGFQPE. A Phosphoserine modification is found at S336.

This sequence belongs to the bile acid:sodium symporter (BASS) (TC 2.A.28) family. Monomer and homodimer.

It is found in the membrane. It catalyses the reaction taurocholate(out) + 2 Na(+)(out) = taurocholate(in) + 2 Na(+)(in). The catalysed reaction is cholate(out) + 2 Na(+)(out) = cholate(in) + 2 Na(+)(in). The enzyme catalyses taurochenodeoxycholate(out) + 2 Na(+)(out) = taurochenodeoxycholate(in) + 2 Na(+)(in). It carries out the reaction tauroursodeoxycholate(out) + 2 Na(+)(out) = tauroursodeoxycholate(in) + 2 Na(+)(in). It catalyses the reaction glycocholate(out) + 2 Na(+)(out) = glycocholate(in) + 2 Na(+)(in). The catalysed reaction is tauronorcholate(out) + 2 Na(+)(out) = tauronorcholate(in) + 2 Na(+)(in). The enzyme catalyses tauroallocholate(out) + 2 Na(+)(out) = tauroallocholate(in) + 2 Na(+)(in). It carries out the reaction taurodeoxycholate(out) + 2 Na(+)(out) = taurodeoxycholate(in) + 2 Na(+)(in). It catalyses the reaction tauro-beta-muricholate(out) + 2 Na(+)(out) = tauro-beta-muricholate(in) + 2 Na(+)(in). In terms of biological role, plays a critical role in the sodium-dependent reabsorption of bile acids from the lumen of the small intestine. Transports various bile acids, unconjugated or conjugated, such as cholate and taurocholate. Also responsible for bile acid transport in the renal proximal tubules, a salvage mechanism that helps conserve bile acids. Works collaboratively with the Na(+)-taurocholate cotransporting polypeptide (NTCP), the organic solute transporter (OST), and the bile salt export pump (BSEP), to ensure efficacious biological recycling of bile acids during enterohepatic circulation. This is Ileal sodium/bile acid cotransporter (SLC10A2) from Oryctolagus cuniculus (Rabbit).